The sequence spans 176 residues: Ribosome maturation factor RimM (176 aa).

In terms of domain architecture, PRC barrel spans 99-174; it reads KNEFYITDLI…IVLIQPEIWN (76 aa).

This sequence belongs to the RimM family. Binds ribosomal protein uS19.

It is found in the cytoplasm. Functionally, an accessory protein needed during the final step in the assembly of 30S ribosomal subunit, possibly for assembly of the head region. Essential for efficient processing of 16S rRNA. May be needed both before and after RbfA during the maturation of 16S rRNA. It has affinity for free ribosomal 30S subunits but not for 70S ribosomes. In Leptospira interrogans serogroup Icterohaemorrhagiae serovar copenhageni (strain Fiocruz L1-130), this protein is Ribosome maturation factor RimM.